A 582-amino-acid chain; its full sequence is ATP-dependent lipid A-core flippase (582 aa).

5 consecutive transmembrane segments (helical) span residues 16–36 (LWPTIAPFKAGLIVAGIALIL), 64–84 (LLWMPLVVIGLMILRGITSYI), 153–173 (IIGLFIMMFYYSWQLSIILVV), 253–273 (PIIQLIASLALAFVLYAASFP), and 275–295 (VMDSLTAGTITVVFSSMIALM). One can recognise an ABC transmembrane type-1 domain in the interval 28–310 (IVAGIALILN…LTNVNAQFQR (283 aa)). Residues 342–578 (LEFRNVTFTY…HGVYAQLHKM (237 aa)) form the ABC transporter domain. 376–383 (GRSGSGKS) is a binding site for ATP.

This sequence belongs to the ABC transporter superfamily. Lipid exporter (TC 3.A.1.106) family. As to quaternary structure, homodimer.

It is found in the cell inner membrane. It catalyses the reaction ATP + H2O + lipid A-core oligosaccharideSide 1 = ADP + phosphate + lipid A-core oligosaccharideSide 2.. In terms of biological role, involved in lipopolysaccharide (LPS) biosynthesis. Translocates lipid A-core from the inner to the outer leaflet of the inner membrane. Transmembrane domains (TMD) form a pore in the inner membrane and the ATP-binding domain (NBD) is responsible for energy generation. The sequence is that of ATP-dependent lipid A-core flippase from Salmonella choleraesuis (strain SC-B67).